The primary structure comprises 103 residues: Co-chaperonin GroES (103 aa).

Belongs to the GroES chaperonin family. In terms of assembly, heptamer of 7 subunits arranged in a ring. Interacts with the chaperonin GroEL.

The protein resides in the cytoplasm. Its function is as follows. Together with the chaperonin GroEL, plays an essential role in assisting protein folding. The GroEL-GroES system forms a nano-cage that allows encapsulation of the non-native substrate proteins and provides a physical environment optimized to promote and accelerate protein folding. GroES binds to the apical surface of the GroEL ring, thereby capping the opening of the GroEL channel. This is Co-chaperonin GroES from Synechococcus sp. (strain CC9311).